Here is a 415-residue protein sequence, read N- to C-terminus: uncharacterized protein (415 aa).

[4Fe-4S] cluster is bound by residues Cys85, Cys91, Cys94, and Cys175. Residues Gln248, Tyr276, Glu297, and Asn344 each coordinate S-adenosyl-L-methionine. Catalysis depends on Cys371, which acts as the Nucleophile.

This sequence belongs to the class I-like SAM-binding methyltransferase superfamily. RNA M5U methyltransferase family.

This is an uncharacterized protein from Leptospira interrogans serogroup Icterohaemorrhagiae serovar Lai (strain 56601).